A 383-amino-acid chain; its full sequence is S-adenosylmethionine synthase (383 aa).

Histidine 15 provides a ligand contact to ATP. Position 17 (aspartate 17) interacts with Mg(2+). Position 43 (glutamate 43) interacts with K(+). The L-methionine site is built by glutamate 56 and glutamine 99. Positions 99-109 (QSPDINQGVDR) are flexible loop. ATP contacts are provided by residues 164-166 (DAK), 230-231 (RF), aspartate 239, 245-246 (RK), alanine 262, and lysine 266. Aspartate 239 serves as a coordination point for L-methionine. Lysine 270 is an L-methionine binding site.

Belongs to the AdoMet synthase family. In terms of assembly, homotetramer; dimer of dimers. Mg(2+) serves as cofactor. The cofactor is K(+).

The protein resides in the cytoplasm. It carries out the reaction L-methionine + ATP + H2O = S-adenosyl-L-methionine + phosphate + diphosphate. Its pathway is amino-acid biosynthesis; S-adenosyl-L-methionine biosynthesis; S-adenosyl-L-methionine from L-methionine: step 1/1. Catalyzes the formation of S-adenosylmethionine (AdoMet) from methionine and ATP. The overall synthetic reaction is composed of two sequential steps, AdoMet formation and the subsequent tripolyphosphate hydrolysis which occurs prior to release of AdoMet from the enzyme. In Shewanella oneidensis (strain ATCC 700550 / JCM 31522 / CIP 106686 / LMG 19005 / NCIMB 14063 / MR-1), this protein is S-adenosylmethionine synthase.